The following is a 137-amino-acid chain: Acidic phospholipase A2 PL-I (137 aa).

The signal sequence occupies residues 1–17; sequence AVCVSLLGASSIRPLPL. 7 cysteine pairs are disulfide-bonded: cysteine 28-cysteine 89, cysteine 44-cysteine 136, cysteine 46-cysteine 62, cysteine 61-cysteine 117, cysteine 68-cysteine 110, cysteine 78-cysteine 103, and cysteine 96-cysteine 108. Ca(2+) contacts are provided by tyrosine 45, glycine 47, and glycine 49. The active site involves histidine 65. Aspartate 66 contributes to the Ca(2+) binding site. Residue aspartate 111 is part of the active site.

It depends on Ca(2+) as a cofactor. As to expression, expressed by the venom gland.

It localises to the secreted. The enzyme catalyses a 1,2-diacyl-sn-glycero-3-phosphocholine + H2O = a 1-acyl-sn-glycero-3-phosphocholine + a fatty acid + H(+). Its function is as follows. Snake venom phospholipase A2 (PLA2) that may act in the hemostasis system of the prey. Exhibits hydrolytic activities, and prefers the anionic micelles (dPPC with deoxycholate) (793 umol/mg/min) to the zwitterionic micelles (dPPC with Triton X-100) (591 umol/mg/min). PLA2 catalyzes the calcium-dependent hydrolysis of the 2-acyl groups in 3-sn-phosphoglycerides. The chain is Acidic phospholipase A2 PL-I from Walterinnesia aegyptia (Desert black snake).